Here is a 276-residue protein sequence, read N- to C-terminus: NADPH-dependent 7-cyano-7-deazaguanine reductase (276 aa).

83–85 provides a ligand contact to substrate; that stretch reads IES. 85–86 serves as a coordination point for NADPH; that stretch reads SK. Catalysis depends on Cys-184, which acts as the Thioimide intermediate. Asp-191 functions as the Proton donor in the catalytic mechanism. Substrate is bound at residue 223 to 224; it reads HE. Residue 252-253 coordinates NADPH; the sequence is RG.

It belongs to the GTP cyclohydrolase I family. QueF type 2 subfamily. Homodimer.

It is found in the cytoplasm. It carries out the reaction 7-aminomethyl-7-carbaguanine + 2 NADP(+) = 7-cyano-7-deazaguanine + 2 NADPH + 3 H(+). The protein operates within tRNA modification; tRNA-queuosine biosynthesis. Its function is as follows. Catalyzes the NADPH-dependent reduction of 7-cyano-7-deazaguanine (preQ0) to 7-aminomethyl-7-deazaguanine (preQ1). The chain is NADPH-dependent 7-cyano-7-deazaguanine reductase from Pseudomonas aeruginosa (strain ATCC 15692 / DSM 22644 / CIP 104116 / JCM 14847 / LMG 12228 / 1C / PRS 101 / PAO1).